The primary structure comprises 360 residues: Peptide chain release factor 1 (360 aa).

Q235 carries the post-translational modification N5-methylglutamine. Residues 284–293 (QRRQQEESST) show a composition bias toward basic and acidic residues. The tract at residues 284 to 311 (QRRQQEESSTRRNLLGSGDRSDRIRTYN) is disordered.

Belongs to the prokaryotic/mitochondrial release factor family. In terms of processing, methylated by PrmC. Methylation increases the termination efficiency of RF1.

It is found in the cytoplasm. Its function is as follows. Peptide chain release factor 1 directs the termination of translation in response to the peptide chain termination codons UAG and UAA. The chain is Peptide chain release factor 1 from Sodalis glossinidius (strain morsitans).